The sequence spans 90 residues: Protein S100-A6 (90 aa).

2 EF-hand domains span residues 12-47 (LVAI…IGSK) and 48-83 (LQDA…LALI). Residues Thr-28 and Glu-33 each contribute to the Ca(2+) site. An N6-acetyllysine modification is found at Lys-40. Position 46 is a phosphoserine (Ser-46). Lys-47 carries the post-translational modification N6-acetyllysine; alternate. The residue at position 47 (Lys-47) is an N6-succinyllysine; alternate. Positions 61, 63, 65, 67, and 72 each coordinate Ca(2+).

The protein belongs to the S-100 family. Homodimer; head to tail assembly of 2 subunits. Interacts with CACYBP in a calcium-dependent manner. Interacts with ANXA2 and ANXA11 (via N-terminus). Interacts with SUGT1. Interacts with TP53; has higher affinity for TP53 that is phosphorylated on its N-terminal domain, and lower affinity for TP53 that is phosphorylated on its C-terminal domain. Interacts with tropomyosin. Interacts with FKBP4. Interacts with PPP5C (via TPR repeats); the interaction is calcium-dependent and modulates PPP5C activity. Interacts with TPPP; this interaction inhibits TPPP dimerization. Post-translationally, the N-terminus is blocked.

The protein localises to the nucleus envelope. It localises to the cytoplasm. The protein resides in the cell membrane. In terms of biological role, may function as calcium sensor and modulator, contributing to cellular calcium signaling. May function by interacting with other proteins, such as TPR-containing proteins, and indirectly play a role in many physiological processes such as the reorganization of the actin cytoskeleton and in cell motility. Binds 2 calcium ions. Calcium binding is cooperative. The polypeptide is Protein S100-A6 (S100A6) (Homo sapiens (Human)).